The chain runs to 572 residues: Probable D-xylulose kinase A (572 aa).

Positions 95, 166, 282, and 283 each coordinate substrate. Residues Trp-365, 470–471, and Asn-474 contribute to the ATP site; that span reads GG.

This sequence belongs to the FGGY kinase family.

The protein resides in the cytoplasm. It carries out the reaction D-xylulose + ATP = D-xylulose 5-phosphate + ADP + H(+). Highly specific D-xylulose kinase which participates in the catabolism of xylose. Xylose is a major component of hemicelluloses such as xylan. Most fungi utilize D-xylose via three enzymatic reactions, xylose reductase (XR), xylitol dehydrogenase (XDH), and xylulokinase, to form xylulose 5-phosphate, which enters pentose phosphate pathway. The polypeptide is Probable D-xylulose kinase A (xkiA) (Aspergillus flavus (strain ATCC 200026 / FGSC A1120 / IAM 13836 / NRRL 3357 / JCM 12722 / SRRC 167)).